A 312-amino-acid polypeptide reads, in one-letter code: Acetyl-coenzyme A carboxylase carboxyl transferase subunit alpha (312 aa).

Residues 36–286 (NLEKEISKTY…ADYVKKSLNE (251 aa)) form the CoA carboxyltransferase C-terminal domain.

The protein belongs to the AccA family. As to quaternary structure, acetyl-CoA carboxylase is a heterohexamer composed of biotin carboxyl carrier protein (AccB), biotin carboxylase (AccC) and two subunits each of ACCase subunit alpha (AccA) and ACCase subunit beta (AccD).

The protein localises to the cytoplasm. It catalyses the reaction N(6)-carboxybiotinyl-L-lysyl-[protein] + acetyl-CoA = N(6)-biotinyl-L-lysyl-[protein] + malonyl-CoA. It participates in lipid metabolism; malonyl-CoA biosynthesis; malonyl-CoA from acetyl-CoA: step 1/1. Component of the acetyl coenzyme A carboxylase (ACC) complex. First, biotin carboxylase catalyzes the carboxylation of biotin on its carrier protein (BCCP) and then the CO(2) group is transferred by the carboxyltransferase to acetyl-CoA to form malonyl-CoA. This is Acetyl-coenzyme A carboxylase carboxyl transferase subunit alpha from Campylobacter jejuni subsp. doylei (strain ATCC BAA-1458 / RM4099 / 269.97).